A 1535-amino-acid polypeptide reads, in one-letter code: Lysine-specific demethylase 5D (1535 aa).

Positions 14-55 constitute a JmjN domain; the sequence is CPVFEPSWAEFQDPLGYIAKIRPIAEKSGICKIRPPADWQPP. The region spanning 79 to 169 is the ARID domain; it reads TRVKLNYLDQ…IIYPYEMFQS (91 aa). The interval 192-227 is disordered; sequence PHSIPLRQSVQPSKFSSYSRRAKRLQPDPEPTEEDI. Polar residues predominate over residues 197 to 210; sequence LRQSVQPSKFSSYS. Residues K205, K229, K244, and K272 each participate in a glycyl lysine isopeptide (Lys-Gly) (interchain with G-Cter in SUMO2) cross-link. S291 and S307 each carry phosphoserine. The segment at 314–364 adopts a PHD-type 1 zinc-finger fold; it reads SYICQVCSRGDEDDKLLFCDGCDDNYHIFCLLPPLPEIPRGIWRCPKCILA. Residue Y430 participates in 2-oxoglutarate binding. A JmjC domain is found at 458 to 624; the sequence is EYATSGWNLN…AGRQCIEHYR (167 aa). Residues H504 and E506 each contribute to the Fe cation site. Residues S512, N514, and K522 each contribute to the 2-oxoglutarate site. H592 serves as a coordination point for Fe cation. Residues 697–749 form a C5HC2 zinc finger; it reads CIKCKTTCFLSALACYDCPDGLVCLSHINDLCKCSSSRQYLRYRYTLDELPTM. Residue S884 is modified to Phosphoserine. The segment at 1174-1235 adopts a PHD-type 2 zinc-finger fold; it reads ICVCGQVPAG…DTKFLCPLCM (62 aa). At S1342 the chain carries Phosphoserine. Positions 1425–1519 are disordered; sequence HQGSRTRSRA…KDSGSSAACP (95 aa). Basic residues predominate over residues 1428–1441; it reads SRTRSRALERRRRQ. Residues 1473–1487 are compositionally biased toward basic and acidic residues; sequence GREEEHYQEKADREN. Residues 1490-1517 are compositionally biased toward polar residues; it reads LTPSTDHSPSLKGNQNSLQHKDSGSSAA.

It belongs to the JARID1 histone demethylase family. Interacts withPCGF6, MSH5, ZMYND8, AR. The cofactor is L-ascorbate. Fe(2+) serves as cofactor.

The protein resides in the nucleus. The enzyme catalyses N(6),N(6),N(6)-trimethyl-L-lysyl(4)-[histone H3] + 3 2-oxoglutarate + 3 O2 = L-lysyl(4)-[histone H3] + 3 formaldehyde + 3 succinate + 3 CO2. Functionally, histone demethylase that specifically demethylates 'Lys-4' of histone H3, thereby playing a central role in histone code. Does not demethylate histone H3 'Lys-9', H3 'Lys-27', H3 'Lys-36', H3 'Lys-79' or H4 'Lys-20'. Demethylates trimethylated and dimethylated but not monomethylated H3 'Lys-4'. May play a role in spermatogenesis. Involved in transcriptional repression of diverse metastasis-associated genes; in this function seems to cooperate with ZMYND8. Suppresses prostate cancer cell invasion. Regulates androgen receptor (AR) transcriptional activity by demethylating H3K4me3 active transcription marks. The protein is Lysine-specific demethylase 5D (KDM5D) of Pan troglodytes (Chimpanzee).